The primary structure comprises 325 residues: Thiamine-monophosphate kinase (325 aa).

Mg(2+)-binding residues include D30, S45, T46, and D47. Substrate is bound at residue H54. Mg(2+) is bound by residues D75 and D122. ATP contacts are provided by residues 121–122 (GD) and R146. Position 212 (D212) interacts with Mg(2+). Residue S214 participates in ATP binding. Residue D215 participates in Mg(2+) binding. The substrate site is built by E263 and Y319.

This sequence belongs to the thiamine-monophosphate kinase family.

The catalysed reaction is thiamine phosphate + ATP = thiamine diphosphate + ADP. Its pathway is cofactor biosynthesis; thiamine diphosphate biosynthesis; thiamine diphosphate from thiamine phosphate: step 1/1. In terms of biological role, catalyzes the ATP-dependent phosphorylation of thiamine-monophosphate (TMP) to form thiamine-pyrophosphate (TPP), the active form of vitamin B1. This Salmonella typhimurium (strain LT2 / SGSC1412 / ATCC 700720) protein is Thiamine-monophosphate kinase (thiL).